The primary structure comprises 181 residues: Protein GrpE (181 aa).

Positions 1–20 are enriched in polar residues; the sequence is MENTQENPASQSAEENGSET. The disordered stretch occupies residues 1–39; the sequence is MENTQENPASQSAEENGSETQAAQDAAPAAEAADAALAE. Low complexity predominate over residues 21 to 39; it reads QAAQDAAPAAEAADAALAE.

This sequence belongs to the GrpE family. As to quaternary structure, homodimer.

It is found in the cytoplasm. In terms of biological role, participates actively in the response to hyperosmotic and heat shock by preventing the aggregation of stress-denatured proteins, in association with DnaK and GrpE. It is the nucleotide exchange factor for DnaK and may function as a thermosensor. Unfolded proteins bind initially to DnaJ; upon interaction with the DnaJ-bound protein, DnaK hydrolyzes its bound ATP, resulting in the formation of a stable complex. GrpE releases ADP from DnaK; ATP binding to DnaK triggers the release of the substrate protein, thus completing the reaction cycle. Several rounds of ATP-dependent interactions between DnaJ, DnaK and GrpE are required for fully efficient folding. This is Protein GrpE from Burkholderia multivorans (strain ATCC 17616 / 249).